A 418-amino-acid chain; its full sequence is tRNA(Met) cytidine acetate ligase (418 aa).

Residues glycine 95, asparagine 161, and arginine 186 each coordinate ATP.

Belongs to the TmcAL family.

It is found in the cytoplasm. It carries out the reaction cytidine(34) in elongator tRNA(Met) + acetate + ATP = N(4)-acetylcytidine(34) in elongator tRNA(Met) + AMP + diphosphate. Its function is as follows. Catalyzes the formation of N(4)-acetylcytidine (ac(4)C) at the wobble position of elongator tRNA(Met), using acetate and ATP as substrates. First activates an acetate ion to form acetyladenylate (Ac-AMP) and then transfers the acetyl group to tRNA to form ac(4)C34. This is tRNA(Met) cytidine acetate ligase from Thermotoga maritima (strain ATCC 43589 / DSM 3109 / JCM 10099 / NBRC 100826 / MSB8).